The sequence spans 295 residues: MNKMEYLSIFGFVSVLYLIIRVDARAYEVNGIDQSKVGFDDNYVVTWGQNNVLKLNQGKEVQLSLDHSSGSGFESKNHYESGFFQIRIKVPPKDTSGVVTAFYLTSKGNTHDEVDFEFLGNKEGKLAVQTNVFTNGKGNREQKLALWFDPSKDFHTYAILWNPYQIVLYVDNIPVRVFKNTTSQGMNYPSKPMQVVVSLWNGENWATDGGKSKINWSLAPFKANFQGFNNSGCFTNAEKNACGSSAYWWNTGSYSKLSDSEQKAYTNVRQKYMNYDYCSDKVRFHVPPSECKWNN.

The first 24 residues, 1–24 (MNKMEYLSIFGFVSVLYLIIRVDA), serve as a signal peptide directing secretion. A GH16 domain is found at 27–225 (YEVNGIDQSK…WSLAPFKANF (199 aa)). The active-site Nucleophile is the Glu113. The Proton donor role is filled by Glu117. Residues Glu117, 129 to 131 (QTN), and 139 to 141 (NRE) contribute to the xyloglucan site. N-linked (GlcNAc...) asparagine glycosylation occurs at Asn180. Residues 204–205 (NW) and Gly209 contribute to the xyloglucan site. N-linked (GlcNAc...) asparagine glycans are attached at residues Asn215 and Asn229. Disulfide bonds link Cys233-Cys242 and Cys278-Cys291. Position 283 (Arg283) interacts with xyloglucan.

The protein belongs to the glycosyl hydrolase 16 family. XTH group 1 subfamily. Contains at least one intrachain disulfide bond essential for its enzymatic activity.

It localises to the secreted. The protein resides in the cell wall. It is found in the extracellular space. Its subcellular location is the apoplast. The enzyme catalyses breaks a beta-(1-&gt;4) bond in the backbone of a xyloglucan and transfers the xyloglucanyl segment on to O-4 of the non-reducing terminal glucose residue of an acceptor, which can be a xyloglucan or an oligosaccharide of xyloglucan.. May catalyze xyloglucan endohydrolysis (XEH) and/or endotransglycosylation (XET). Cleaves and religates xyloglucan polymers, an essential constituent of the primary cell wall, and thereby participates in cell wall construction of growing tissues. The chain is Putative xyloglucan endotransglucosylase/hydrolase protein 1 (XTH1) from Arabidopsis thaliana (Mouse-ear cress).